We begin with the raw amino-acid sequence, 321 residues long: MQGGQEVGRESVSDLAEEPGEGSPHQTARGQSGDGLERRRICCDGPVVLPDTNANSSRLDEGLPTSCPHPGELSGGWGEFEGFRESSAKSEQFSQSFELLGRATECQPLRTPSVPEEGSSCQVQQGGPWVTGTAAGPSSESIPSYEKVFRLAFQEVAVEQAPEDVCSLDHFLERSNEGAASVPRLCSESRKLWRALQNTDTASASRCLWGESHCRENLLPVLGVDAAQKSPPGGQGHVLEGSDLRKPEELLAVSGFHLHHCKALIQTKLSGTSSSRQGSLITYSLFLKTPLQGNGRYITIPQKKIFTPRNLKMAFFNNDVC.

Residues Met-1–Phe-80 form a disordered region.

This is an uncharacterized protein from Mus musculus (Mouse).